A 280-amino-acid polypeptide reads, in one-letter code: Protoheme IX farnesyltransferase (280 aa).

Transmembrane regions (helical) follow at residues 2 to 21 (VVAT…RAGL), 30 to 50 (AAVP…VVSG), 83 to 103 (LALW…LVGV), 105 to 125 (ATTG…YTPL), 131 to 151 (LSLP…WTSV), 160 to 180 (FLLF…ISLF), 206 to 226 (IVGY…LGVA), 229 to 249 (VYLG…VYGL), and 260 to 280 (QVFF…MIGA).

It belongs to the UbiA prenyltransferase family. Protoheme IX farnesyltransferase subfamily.

It is found in the cell inner membrane. It carries out the reaction heme b + (2E,6E)-farnesyl diphosphate + H2O = Fe(II)-heme o + diphosphate. Its pathway is porphyrin-containing compound metabolism; heme O biosynthesis; heme O from protoheme: step 1/1. Its function is as follows. Converts heme B (protoheme IX) to heme O by substitution of the vinyl group on carbon 2 of heme B porphyrin ring with a hydroxyethyl farnesyl side group. This chain is Protoheme IX farnesyltransferase, found in Sorangium cellulosum (strain So ce56) (Polyangium cellulosum (strain So ce56)).